Reading from the N-terminus, the 213-residue chain is Transmembrane protein 186 (213 aa).

The Mitochondrial matrix portion of the chain corresponds to 1 to 79 (MAALLRAVRR…FLSRLKLAQT (79 aa)). A helical membrane pass occupies residues 80–100 (ALTVVALPPGYYLYSQGLLTL). Residues 101–102 (NT) lie on the Mitochondrial intermembrane side of the membrane. A helical membrane pass occupies residues 103 to 123 (VCLMSGISGFALTMLCWMSYF). Residues 124–213 (LRRLVGILYL…QVFGVHQMLK (90 aa)) are Mitochondrial matrix-facing.

It belongs to the TMEM186 family. As to quaternary structure, part of the mitochondrial complex I assembly/MCIA complex that comprises at least the core subunits TMEM126B, NDUFAF1, ECSIT and ACAD9 and complement subunits such as COA1 and TMEM186. Interacts with MT-ND3.

The protein localises to the mitochondrion inner membrane. Functionally, as part of the MCIA complex, required for efficient assembly of the mitochondrial complex I. This is Transmembrane protein 186 from Homo sapiens (Human).